Reading from the N-terminus, the 226-residue chain is uncharacterized protein (226 aa).

This is an uncharacterized protein from Methanocaldococcus jannaschii (strain ATCC 43067 / DSM 2661 / JAL-1 / JCM 10045 / NBRC 100440) (Methanococcus jannaschii).